The following is a 130-amino-acid chain: Protein ApaG (130 aa).

The 125-residue stretch at 3–127 (STITRDIQIT…FSLDSPFSRQ (125 aa)) folds into the ApaG domain.

The sequence is that of Protein ApaG from Beijerinckia indica subsp. indica (strain ATCC 9039 / DSM 1715 / NCIMB 8712).